The chain runs to 766 residues: Phosphoribosylformylglycinamidine synthase subunit PurL (766 aa).

Residue His66 is part of the active site. ATP is bound by residues Tyr69 and Lys113. Glu115 is a Mg(2+) binding site. Substrate contacts are provided by residues Ser116–His119 and Arg138. Catalysis depends on His117, which acts as the Proton acceptor. Asp139 provides a ligand contact to Mg(2+). Residue Gln264 coordinates substrate. Residue Asp292 participates in Mg(2+) binding. Glu336–Gln338 provides a ligand contact to substrate. Positions 524 and 561 each coordinate ATP. A Mg(2+)-binding site is contributed by Asn562. Ser564 provides a ligand contact to substrate.

This sequence belongs to the FGAMS family. Monomer. Part of the FGAM synthase complex composed of 1 PurL, 1 PurQ and 2 PurS subunits.

The protein resides in the cytoplasm. The enzyme catalyses N(2)-formyl-N(1)-(5-phospho-beta-D-ribosyl)glycinamide + L-glutamine + ATP + H2O = 2-formamido-N(1)-(5-O-phospho-beta-D-ribosyl)acetamidine + L-glutamate + ADP + phosphate + H(+). It participates in purine metabolism; IMP biosynthesis via de novo pathway; 5-amino-1-(5-phospho-D-ribosyl)imidazole from N(2)-formyl-N(1)-(5-phospho-D-ribosyl)glycinamide: step 1/2. In terms of biological role, part of the phosphoribosylformylglycinamidine synthase complex involved in the purines biosynthetic pathway. Catalyzes the ATP-dependent conversion of formylglycinamide ribonucleotide (FGAR) and glutamine to yield formylglycinamidine ribonucleotide (FGAM) and glutamate. The FGAM synthase complex is composed of three subunits. PurQ produces an ammonia molecule by converting glutamine to glutamate. PurL transfers the ammonia molecule to FGAR to form FGAM in an ATP-dependent manner. PurS interacts with PurQ and PurL and is thought to assist in the transfer of the ammonia molecule from PurQ to PurL. This Mycobacterium bovis (strain BCG / Pasteur 1173P2) protein is Phosphoribosylformylglycinamidine synthase subunit PurL.